Here is a 288-residue protein sequence, read N- to C-terminus: Elongation factor Ts (288 aa).

The segment at 79–82 is involved in Mg(2+) ion dislocation from EF-Tu; that stretch reads TDFV.

Belongs to the EF-Ts family.

It is found in the cytoplasm. Its function is as follows. Associates with the EF-Tu.GDP complex and induces the exchange of GDP to GTP. It remains bound to the aminoacyl-tRNA.EF-Tu.GTP complex up to the GTP hydrolysis stage on the ribosome. The protein is Elongation factor Ts of Ehrlichia ruminantium (strain Gardel).